Consider the following 179-residue polypeptide: Large ribosomal subunit protein uL5 (179 aa).

This sequence belongs to the universal ribosomal protein uL5 family. Part of the 50S ribosomal subunit; part of the 5S rRNA/L5/L18/L25 subcomplex. Contacts the 5S rRNA and the P site tRNA. Forms a bridge to the 30S subunit in the 70S ribosome.

Functionally, this is one of the proteins that bind and probably mediate the attachment of the 5S RNA into the large ribosomal subunit, where it forms part of the central protuberance. In the 70S ribosome it contacts protein S13 of the 30S subunit (bridge B1b), connecting the 2 subunits; this bridge is implicated in subunit movement. Contacts the P site tRNA; the 5S rRNA and some of its associated proteins might help stabilize positioning of ribosome-bound tRNAs. The protein is Large ribosomal subunit protein uL5 of Pseudomonas fluorescens (strain ATCC BAA-477 / NRRL B-23932 / Pf-5).